We begin with the raw amino-acid sequence, 454 residues long: Tetrahydroanabasine acetyltransferase (454 aa).

Residues H164 and D389 each act as proton acceptor in the active site.

This sequence belongs to the plant acyltransferase family. As to quaternary structure, monomer.

It catalyses the reaction tetrahydroanabasine + acetyl-CoA = ammodendrine + CoA. It participates in alkaloid biosynthesis. Functionally, tetrahydroanabasine acetyltransferase involved in the accumulation of quinolizidine type antinutritional alkaloids (QAs) natural products. QAs impart a bitter taste to plants, acting as repellents and toxicants for herbivores and predators, and possess a variety of pharmacological effects, including sedative, anticonvulsant, anti-inflammatory, antiviral, antitumor, antipyretic, anti-hepatitis B, antifibrotic, antiallergic, antidiarrheal, analgesic and antimicrobial activities. Mediates the conversion of tetrahydroanabasine into ammodendrine. The chain is Tetrahydroanabasine acetyltransferase from Lupinus albus (White lupine).